Consider the following 231-residue polypeptide: Large ribosomal subunit protein uL1 (231 aa).

The protein belongs to the universal ribosomal protein uL1 family. Part of the 50S ribosomal subunit.

Functionally, binds directly to 23S rRNA. The L1 stalk is quite mobile in the ribosome, and is involved in E site tRNA release. Protein L1 is also a translational repressor protein, it controls the translation of the L11 operon by binding to its mRNA. The sequence is that of Large ribosomal subunit protein uL1 from Polaromonas naphthalenivorans (strain CJ2).